The primary structure comprises 345 residues: Phosphoribosylformylglycinamidine cyclo-ligase (345 aa).

This sequence belongs to the AIR synthase family.

The protein localises to the cytoplasm. The enzyme catalyses 2-formamido-N(1)-(5-O-phospho-beta-D-ribosyl)acetamidine + ATP = 5-amino-1-(5-phospho-beta-D-ribosyl)imidazole + ADP + phosphate + H(+). It participates in purine metabolism; IMP biosynthesis via de novo pathway; 5-amino-1-(5-phospho-D-ribosyl)imidazole from N(2)-formyl-N(1)-(5-phospho-D-ribosyl)glycinamide: step 2/2. In Aeromonas hydrophila subsp. hydrophila (strain ATCC 7966 / DSM 30187 / BCRC 13018 / CCUG 14551 / JCM 1027 / KCTC 2358 / NCIMB 9240 / NCTC 8049), this protein is Phosphoribosylformylglycinamidine cyclo-ligase.